We begin with the raw amino-acid sequence, 306 residues long: Large ribosomal subunit protein bL19m (306 aa).

Basic and acidic residues predominate over residues 34 to 43 (ENQEEQKKEA). The segment at 34-53 (ENQEEQKKEAPPTTPTSPVN) is disordered.

It belongs to the bacterial ribosomal protein bL19 family. As to quaternary structure, component of the mitochondrial ribosome large subunit (39S) which comprises a 16S rRNA and about 50 distinct proteins.

Its subcellular location is the mitochondrion. This Drosophila melanogaster (Fruit fly) protein is Large ribosomal subunit protein bL19m (mRpL19).